Here is a 198-residue protein sequence, read N- to C-terminus: MYDYIKGQLTKITAKYIVVETNGLGYIINVANPYSFTDSVNQLVTIYLHQVIREDAHLLFGFHTEDEKDVFLKLISVSGIGPTTALAIVAVDDNEGLVNAIDNSDIKYLMKFPKIGKKTAQQMVLDLAGKFVEAPQETGNTKARSNKAGNTQLDEAIEALLALGYKATELKKIRAFFEGTSETAEQYIKSALKLLMKG.

The segment at 1-63 (MYDYIKGQLT…EDAHLLFGFH (63 aa)) is domain I. Residues 64-142 (TEDEKDVFLK…EAPQETGNTK (79 aa)) form a domain II region. Residues 143–147 (ARSNK) are flexible linker. Residues 148–198 (AGNTQLDEAIEALLALGYKATELKKIRAFFEGTSETAEQYIKSALKLLMKG) are domain III.

Belongs to the RuvA family. As to quaternary structure, homotetramer. Forms an RuvA(8)-RuvB(12)-Holliday junction (HJ) complex. HJ DNA is sandwiched between 2 RuvA tetramers; dsDNA enters through RuvA and exits via RuvB. An RuvB hexamer assembles on each DNA strand where it exits the tetramer. Each RuvB hexamer is contacted by two RuvA subunits (via domain III) on 2 adjacent RuvB subunits; this complex drives branch migration. In the full resolvosome a probable DNA-RuvA(4)-RuvB(12)-RuvC(2) complex forms which resolves the HJ.

It is found in the cytoplasm. Functionally, the RuvA-RuvB-RuvC complex processes Holliday junction (HJ) DNA during genetic recombination and DNA repair, while the RuvA-RuvB complex plays an important role in the rescue of blocked DNA replication forks via replication fork reversal (RFR). RuvA specifically binds to HJ cruciform DNA, conferring on it an open structure. The RuvB hexamer acts as an ATP-dependent pump, pulling dsDNA into and through the RuvAB complex. HJ branch migration allows RuvC to scan DNA until it finds its consensus sequence, where it cleaves and resolves the cruciform DNA. The protein is Holliday junction branch migration complex subunit RuvA of Streptococcus pyogenes serotype M12 (strain MGAS2096).